The chain runs to 220 residues: Iron-sulfur cluster repair protein YtfE (220 aa).

It belongs to the RIC family. YtfE subfamily. Homodimer.

It is found in the cytoplasm. In terms of biological role, di-iron-containing protein involved in the repair of iron-sulfur clusters damaged by oxidative and nitrosative stress conditions. The polypeptide is Iron-sulfur cluster repair protein YtfE (Shigella boydii serotype 4 (strain Sb227)).